The primary structure comprises 231 residues: Octanoyltransferase (231 aa).

Residues Pro29–Pro231 form the BPL/LPL catalytic domain. Substrate contacts are provided by residues Arg68–His75, Ala164–Gly166, and Gly177–Ala179. Residue Cys195 is the Acyl-thioester intermediate of the active site.

Belongs to the LipB family.

It is found in the cytoplasm. The enzyme catalyses octanoyl-[ACP] + L-lysyl-[protein] = N(6)-octanoyl-L-lysyl-[protein] + holo-[ACP] + H(+). It functions in the pathway protein modification; protein lipoylation via endogenous pathway; protein N(6)-(lipoyl)lysine from octanoyl-[acyl-carrier-protein]: step 1/2. Catalyzes the transfer of endogenously produced octanoic acid from octanoyl-acyl-carrier-protein onto the lipoyl domains of lipoate-dependent enzymes. Lipoyl-ACP can also act as a substrate although octanoyl-ACP is likely to be the physiological substrate. The chain is Octanoyltransferase from Verminephrobacter eiseniae (strain EF01-2).